The sequence spans 163 residues: Interleukin-17F (163 aa).

An N-terminal signal peptide occupies residues 1-30 (MTVKSLHVTAMVKYLLLLILGLAFLRETAA). An N-linked (GlcNAc...) asparagine glycan is attached at Asn-83. Disulfide bonds link Cys-102/Cys-152 and Cys-107/Cys-154.

The protein belongs to the IL-17 family. Homodimer; disulfide-linked. Heterodimer with IL17A (IL17A-IL17F). Forms complexes with IL17RA and IL17RC receptors with 2:1 binding stoichiometry: two receptor chains for one interleukin molecule. IL17F homodimer forms predominantly complexes with IL17RC homodimer, whereas IL17A-IL17F favors complexes with IL17RA-IL17RC. IL17RA and IL17RC chains cannot distinguish between IL17A and IL17F molecules, potentially enabling the formation of topologically distinct complexes.

Its subcellular location is the secreted. Its function is as follows. Effector cytokine of innate and adaptive immune system involved in antimicrobial host defense and maintenance of tissue integrity. IL17A-IL17F signals via IL17RA-IL17RC heterodimeric receptor complex, triggering homotypic interaction of IL17RA and IL17RC chains with TRAF3IP2 adapter through SEFIR domains. This leads to downstream TRAF6-mediated activation of NF-kappa-B and MAPkinase pathways ultimately resulting in transcriptional activation of cytokines, chemokines, antimicrobial peptides and matrix metalloproteinases, with potential strong immune inflammation. IL17A-IL17F is primarily involved in host defense against extracellular bacteria and fungi by inducing neutrophilic inflammation. As signature effector cytokine of T-helper 17 cells (Th17), primarily induces neutrophil activation and recruitment at infection and inflammatory sites. Stimulates the production of antimicrobial beta-defensins DEFB1, DEFB103A, and DEFB104A by mucosal epithelial cells, limiting the entry of microbes through the epithelial barriers. IL17F homodimer can signal via IL17RC homodimeric receptor complex, triggering downstream activation of TRAF6 and NF-kappa-B signaling pathway. Via IL17RC induces transcriptional activation of IL33, a potent cytokine that stimulates group 2 innate lymphoid cells and adaptive T-helper 2 cells involved in pulmonary allergic response to fungi. Likely via IL17RC, promotes sympathetic innervation of peripheral organs by coordinating the communication between gamma-delta T cells and parenchymal cells. Stimulates sympathetic innervation of thermogenic adipose tissue by driving TGFB1 expression. Regulates the composition of intestinal microbiota and immune tolerance by inducing antimicrobial proteins that specifically control the growth of commensal Firmicutes and Bacteroidetes. The chain is Interleukin-17F (IL17F) from Callithrix jacchus (White-tufted-ear marmoset).